The primary structure comprises 68 residues: Beta-defensin 1 (68 aa).

The N-terminal stretch at M1–G21 is a signal peptide. Residues D22–S32 constitute a propeptide that is removed on maturation. 3 disulfides stabilise this stretch: C37–C66, C44–C59, and C49–C67.

This sequence belongs to the beta-defensin family. In terms of assembly, monomer. Homodimer.

It is found in the secreted. The protein localises to the membrane. Has bactericidal activity. May act as a ligand for C-C chemokine receptor CCR6. Positively regulates the sperm motility and bactericidal activity in a CCR6-dependent manner. Binds to CCR6 and triggers Ca2+ mobilization in the sperm which is important for its motility. This Macaca mulatta (Rhesus macaque) protein is Beta-defensin 1 (DEFB1).